The following is a 109-amino-acid chain: uncharacterized protein (109 aa).

This sequence to E.coli YtfG C-terminal region.

This is an uncharacterized protein from Haemophilus influenzae (strain ATCC 51907 / DSM 11121 / KW20 / Rd).